A 244-amino-acid polypeptide reads, in one-letter code: Krueppel-like factor 9 (244 aa).

Disordered stretches follow at residues Val-24 to Gly-51 and Pro-79 to His-143. A compositionally biased stretch (basic and acidic residues) spans Asp-32 to Gly-51. Ser-122 is subject to Phosphoserine. The segment covering Lys-134–His-143 has biased composition (basic residues). 3 consecutive C2H2-type zinc fingers follow at residues His-143–His-167, Phe-173–His-197, and Phe-203–His-225.

The protein belongs to the Sp1 C2H2-type zinc-finger protein family. Interacts with ZZEF1.

The protein resides in the nucleus. Transcription factor that binds to GC box promoter elements. Selectively activates mRNA synthesis from genes containing tandem repeats of GC boxes but represses genes with a single GC box. Acts as an epidermal circadian transcription factor regulating keratinocyte proliferation. In Rattus norvegicus (Rat), this protein is Krueppel-like factor 9 (Klf9).